The following is a 410-amino-acid chain: Translation initiation factor 2 subunit gamma (410 aa).

The tr-type G domain occupies 9 to 202 (QAEVNIGMVG…AIEEFIPTPE (194 aa)). Residues 18–25 (GHVDHGKT) form a G1 region. Asp-21, Thr-25, Gly-46, and Thr-48 together coordinate Mg(2+). 21–26 (DHGKTT) provides a ligand contact to GTP. The tract at residues 46-50 (GITIK) is G2. Zn(2+)-binding residues include Cys-61, Cys-64, Cys-73, and Cys-76. The tract at residues 90–93 (DAPG) is G3. GTP contacts are provided by residues 145-148 (NKIE) and 180-182 (SAL). Residues 145-148 (NKIE) are G4. Positions 180–182 (SAL) are G5.

This sequence belongs to the TRAFAC class translation factor GTPase superfamily. Classic translation factor GTPase family. EIF2G subfamily. Heterotrimer composed of an alpha, a beta and a gamma chain. Mg(2+) serves as cofactor.

The enzyme catalyses GTP + H2O = GDP + phosphate + H(+). EIF-2 functions in the early steps of protein synthesis by forming a ternary complex with GTP and initiator tRNA. This is Translation initiation factor 2 subunit gamma from Thermococcus onnurineus (strain NA1).